Reading from the N-terminus, the 301-residue chain is Homoserine O-acetyltransferase (301 aa).

The active-site Acyl-thioester intermediate is C142. Substrate is bound by residues K163 and S192. H235 (proton acceptor) is an active-site residue. The active site involves E237. Substrate is bound at residue R249.

This sequence belongs to the MetA family.

It is found in the cytoplasm. It catalyses the reaction L-homoserine + acetyl-CoA = O-acetyl-L-homoserine + CoA. Its pathway is amino-acid biosynthesis; L-methionine biosynthesis via de novo pathway; O-acetyl-L-homoserine from L-homoserine: step 1/1. Transfers an acetyl group from acetyl-CoA to L-homoserine, forming acetyl-L-homoserine. This is Homoserine O-acetyltransferase from Lachnoclostridium phytofermentans (strain ATCC 700394 / DSM 18823 / ISDg) (Clostridium phytofermentans).